The primary structure comprises 878 residues: Phosphoenolpyruvate carboxylase (878 aa).

Residues His-138 and Lys-545 contribute to the active site.

This sequence belongs to the PEPCase type 1 family. Mg(2+) serves as cofactor.

The catalysed reaction is oxaloacetate + phosphate = phosphoenolpyruvate + hydrogencarbonate. Its function is as follows. Forms oxaloacetate, a four-carbon dicarboxylic acid source for the tricarboxylic acid cycle. This is Phosphoenolpyruvate carboxylase from Shewanella halifaxensis (strain HAW-EB4).